The sequence spans 293 residues: Tyrosine recombinase XerD (293 aa).

Residues 1–83 (MHGLIADFIH…ALRKFYRFLL (83 aa)) form the Core-binding (CB) domain. One can recognise a Tyr recombinase domain in the interval 104–287 (HLPATLSGTE…SNQHLVAVYH (184 aa)). Residues R144, K168, H239, R242, and H265 contribute to the active site. The active-site O-(3'-phospho-DNA)-tyrosine intermediate is Y274.

Belongs to the 'phage' integrase family. XerD subfamily. As to quaternary structure, forms a cyclic heterotetrameric complex composed of two molecules of XerC and two molecules of XerD.

Its subcellular location is the cytoplasm. Functionally, site-specific tyrosine recombinase, which acts by catalyzing the cutting and rejoining of the recombining DNA molecules. The XerC-XerD complex is essential to convert dimers of the bacterial chromosome into monomers to permit their segregation at cell division. It also contributes to the segregational stability of plasmids. The polypeptide is Tyrosine recombinase XerD (Lacticaseibacillus casei (Lactobacillus casei)).